A 303-amino-acid polypeptide reads, in one-letter code: Small ribosomal subunit protein uS2 (303 aa).

The interval Ala-267–Ser-303 is disordered.

This sequence belongs to the universal ribosomal protein uS2 family.

The protein is Small ribosomal subunit protein uS2 of Solibacter usitatus (strain Ellin6076).